The chain runs to 24 residues: Brevinin-1Ra (24 aa).

A disulfide bridge connects residues Cys18 and Cys24.

As to expression, expressed by the skin glands.

Its subcellular location is the secreted. Its function is as follows. Antimicrobial peptide. The protein is Brevinin-1Ra of Pelophylax ridibundus (Marsh frog).